Consider the following 543-residue polypeptide: T-complex protein 1 subunit eta (543 aa).

Position 1 is an N-acetylmethionine (methionine 1). Glycine 41 is an ADP binding site. Glycine 41 contributes to the ATP binding site. At lysine 67 the chain carries N6-acetyllysine. Position 92 (aspartate 92) interacts with Mg(2+). Residues glycine 93, threonine 94, threonine 95, serine 96, serine 164, and serine 165 each coordinate ADP. Glycine 93 serves as a coordination point for ATP. Serine 96 contributes to the ATP binding site. N6-acetyllysine occurs at positions 250 and 320. Residues arginine 398 and glycine 409 each contribute to the ATP site. Glycine 409 serves as a coordination point for ADP. Lysine 430 participates in a covalent cross-link: Glycyl lysine isopeptide (Lys-Gly) (interchain with G-Cter in SUMO2). The ADP site is built by glutamate 494 and arginine 499. Residue arginine 499 coordinates ATP. The interval 524–543 is disordered; that stretch reads RSTVDAPTAAGRGRGRGRPH. Arginine 535 is subject to Omega-N-methylarginine.

The protein belongs to the TCP-1 chaperonin family. In terms of assembly, component of the chaperonin-containing T-complex (TRiC), a hexadecamer composed of two identical back-to-back stacked rings enclosing a protein folding chamber. Each ring is made up of eight different subunits: TCP1/CCT1, CCT2, CCT3, CCT4, CCT5, CCT6A/CCT6, CCT7, CCT8. Interacts with PACRG. Interacts with DLEC1.

It localises to the cytoplasm. It catalyses the reaction ATP + H2O = ADP + phosphate + H(+). Functionally, component of the chaperonin-containing T-complex (TRiC), a molecular chaperone complex that assists the folding of actin, tubulin and other proteins upon ATP hydrolysis. The TRiC complex mediates the folding of WRAP53/TCAB1, thereby regulating telomere maintenance. The protein is T-complex protein 1 subunit eta (CCT7) of Homo sapiens (Human).